The chain runs to 333 residues: 1D-myo-inositol 2-acetamido-2-deoxy-alpha-D-glucopyranoside deacetylase (333 aa).

Zn(2+) is bound by residues histidine 18, aspartate 21, and histidine 165.

Belongs to the MshB deacetylase family. Zn(2+) serves as cofactor.

It catalyses the reaction 1D-myo-inositol 2-acetamido-2-deoxy-alpha-D-glucopyranoside + H2O = 1D-myo-inositol 2-amino-2-deoxy-alpha-D-glucopyranoside + acetate. Its function is as follows. Catalyzes the deacetylation of 1D-myo-inositol 2-acetamido-2-deoxy-alpha-D-glucopyranoside (GlcNAc-Ins) in the mycothiol biosynthesis pathway. This is 1D-myo-inositol 2-acetamido-2-deoxy-alpha-D-glucopyranoside deacetylase from Corynebacterium jeikeium (strain K411).